Here is a 327-residue protein sequence, read N- to C-terminus: Glycerol-3-phosphate dehydrogenase [NAD(P)+] (327 aa).

NADPH contacts are provided by tryptophan 11, histidine 30, and lysine 103. 3 residues coordinate sn-glycerol 3-phosphate: lysine 103, glycine 131, and serine 133. Residue alanine 135 participates in NADPH binding. Sn-glycerol 3-phosphate is bound by residues lysine 186, aspartate 243, serine 253, arginine 254, and asparagine 255. Catalysis depends on lysine 186, which acts as the Proton acceptor. Arginine 254 is a binding site for NADPH. 2 residues coordinate NADPH: valine 281 and glutamate 283.

Belongs to the NAD-dependent glycerol-3-phosphate dehydrogenase family.

It localises to the cytoplasm. It catalyses the reaction sn-glycerol 3-phosphate + NAD(+) = dihydroxyacetone phosphate + NADH + H(+). It carries out the reaction sn-glycerol 3-phosphate + NADP(+) = dihydroxyacetone phosphate + NADPH + H(+). It participates in membrane lipid metabolism; glycerophospholipid metabolism. Catalyzes the reduction of the glycolytic intermediate dihydroxyacetone phosphate (DHAP) to sn-glycerol 3-phosphate (G3P), the key precursor for phospholipid synthesis. This is Glycerol-3-phosphate dehydrogenase [NAD(P)+] from Wolbachia pipientis wMel.